The chain runs to 340 residues: Chitinase 2 (340 aa).

Residues 1–32 (MSTPRAAASLAKKAALVALAVLAAALATAARA) form the signal peptide. A Chitin-binding type-1 domain is found at 33–73 (EQCGAQAGGARCPNCLCCSRWGWCGTTSDFCGDGCQSQCSG). 8 disulfide bridges follow: Cys35–Cys50, Cys44–Cys56, Cys47–Cys74, Cys49–Cys63, Cys67–Cys71, Cys110–Cys172, Cys184–Cys192, and Cys291–Cys323. Glu154 functions as the Proton donor in the catalytic mechanism.

The protein belongs to the glycosyl hydrolase 19 family. Chitinase class I subfamily. In terms of tissue distribution, expressed in roots, sheaths and meristems.

It catalyses the reaction Random endo-hydrolysis of N-acetyl-beta-D-glucosaminide (1-&gt;4)-beta-linkages in chitin and chitodextrins.. Functionally, hydrolyzes chitin and plays a role in defense against fungal pathogens containing chitin. Its overexpression confers enhanced resistance to sheath blight pathogen (R.solani). The protein is Chitinase 2 (Cht2) of Oryza sativa subsp. japonica (Rice).